Here is a 1064-residue protein sequence, read N- to C-terminus: MASESETLNPSARIMTFYPTMEEFRNFSRYIAYIESQGAHRAGLAKVVPPKEWKPRTSYDDIDDLVIPAPIQQLVTGQSGLFTQYNIQKKAMTVREFRKIANSDKYCTPRYSEFEELERKYWKNLTFNPPIYGADVNGTLYEQHVDEWNIGRLKTILDLVEKESGITIEGVNTPYLYFGMWKTSFAWHTEDMDLYSINYLHFGEPKSWYSVPPEHGKRLERLAKGFFPGSAQSCEAFLRHKMTLISPLMLKKYGIPFDKVTQEAGEFMITFPYGYHAGFNHGFNCAESTNFATRRWIEYGKQAVLCSCRKDMVKISMDVFVRRFQPERYKLWKAGKDSMVIDHTLPTPEAAEFLKDSGGLTPRAGSEECPEEDVEAADQGEEGDVKRSLAKHRIGTKRHRVCLEIPQEVSQSELFPKEELSSGQYEMTECPATLAPVRPTHSSVRQVEDSLPFPDYSDPTEVKFEELKNVKLEEEDEEDEPEAAALDLSVNPASVGGRLVFSGSKKKSSSSLGSTSSQDSVSSDSETAESVSCQGQEKTGVLTVHSYARGDGKAATGEPSVKKKRSAPRSISEQELAEVADEYMLSLEENKKTKGRRQPLSKLPRHHPLVLQECGSDDETSEQLTPEEEAEETEAWAKPLSQLWQNRPPNFEAEKEFNEIMAQQAPHCAVCMIFQTYHQVEFGAFSQSCGDASEPAAQTQRTKPLIPEMCFTTTGCSTDINLSTPYLEEDGTSMLVSCKKCSVRVHASCYGVPPAKASEEWMCSRCSANALEEDCCLCSLRGGALQRANDDRWVHVSCAVAILEARFVNIAERSPVDVSKIPLPRFKLKCVFCKKRRKRNAGCCVQCSHGRCPTAFHVSCAQAAGVMMQPDDWPFVVFITCFRHKIPNLERAKGALLSITAGQKVISKHKNGRFYQCEVVRLTTETFYEVNFDDGSFSDNLYPEDIVSQDCLQLGPPAEGEVVQVRWTDGQVYGAKFVASHPIQMYQVEFEDGSQLVVKRDDVYTLDEELPKRVKSRLSVASDMRFNEIFTEKEVKQEKKRQRVINSRYREDYIEPALYRAIME.

Residue alanine 2 is modified to N-acetylalanine. Residues 14–56 enclose the JmjN domain; sequence IMTFYPTMEEFRNFSRYIAYIESQGAHRAGLAKVVPPKEWKPR. Tyrosine 132 is a binding site for 2-oxoglutarate. The JmjC domain maps to 142–308; sequence EQHVDEWNIG…YGKQAVLCSC (167 aa). Positions 188 and 190 each coordinate Fe cation. 2 residues coordinate 2-oxoglutarate: asparagine 198 and lysine 206. Residues cysteine 234 and histidine 240 each coordinate Zn(2+). Lysine 241 serves as a coordination point for 2-oxoglutarate. Fe cation is bound at residue histidine 276. Cysteine 306 and cysteine 308 together coordinate Zn(2+). 5 disordered regions span residues 354–384, 434–489, 502–537, 549–573, and 590–643; these read LKDS…EEGD, LAPV…LDLS, SGSK…QGQE, RGDG…SISE, and NKKT…LSQL. A compositionally biased stretch (acidic residues) spans 368 to 382; that stretch reads ECPEEDVEAADQGEE. Residues 460–472 are compositionally biased toward basic and acidic residues; sequence TEVKFEELKNVKL. Residues 473-482 are compositionally biased toward acidic residues; that stretch reads EEEDEEDEPE. Residues 509–525 are compositionally biased toward low complexity; the sequence is SSSLGSTSSQDSVSSDS. Position 523 is a phosphoserine (serine 523). Over residues 528 to 537 the composition is skewed to polar residues; sequence AESVSCQGQE. Basic residues predominate over residues 593–608; that stretch reads TKGRRQPLSKLPRHHP. An interaction with NCOR1 region spans residues 597–638; sequence RQPLSKLPRHHPLVLQECGSDDETSEQLTPEEEAEETEAWAK. Residues 615 to 634 are compositionally biased toward acidic residues; sequence GSDDETSEQLTPEEEAEETE. A PHD-type 1 zinc finger spans residues 709–767; sequence MCFTTTGCSTDINLSTPYLEEDGTSMLVSCKKCSVRVHASCYGVPPAKASEEWMCSRCS. The segment at 772–805 adopts a C2HC pre-PHD-type zinc-finger fold; sequence EEDCCLCSLRGGALQRANDDRWVHVSCAVAILEA. Residues 828 to 885 form a PHD-type 2 zinc finger; that stretch reads LKCVFCKKRRKRNAGCCVQCSHGRCPTAFHVSCAQAAGVMMQPDDWPFVVFITCFRHK. Tudor domains lie at 897 to 954 and 955 to 1011; these read LSIT…CLQL and GPPA…EELP.

It belongs to the JHDM3 histone demethylase family. In terms of assembly, interacts with histone deacetylase proteins HDAC1, HDAC2 and HDAC3. Interacts with RB and NCOR1. Interacts with VRK1. Fe(2+) is required as a cofactor. Post-translationally, ubiquitinated by RNF8 and RNF168, leading to its degradation. Degradation promotes accessibility of H4K20me2 mark for DNA repair protein TP53BP1, which is then recruited. Also ubiquitinated by the SCF(FBXO22) complex; leading to proteasomal degradation. Widely expressed.

It localises to the nucleus. The enzyme catalyses N(6),N(6),N(6)-trimethyl-L-lysyl(9)-[histone H3] + 2 2-oxoglutarate + 2 O2 = N(6)-methyl-L-lysyl(9)-[histone H3] + 2 formaldehyde + 2 succinate + 2 CO2. The catalysed reaction is N(6),N(6),N(6)-trimethyl-L-lysyl(36)-[histone H3] + 2 2-oxoglutarate + 2 O2 = N(6)-methyl-L-lysyl(36)-[histone H3] + 2 formaldehyde + 2 succinate + 2 CO2. Its function is as follows. Histone demethylase that specifically demethylates 'Lys-9' and 'Lys-36' residues of histone H3, thereby playing a central role in histone code. Does not demethylate histone H3 'Lys-4', H3 'Lys-27' nor H4 'Lys-20'. Demethylates trimethylated H3 'Lys-9' and H3 'Lys-36' residue, while it has no activity on mono- and dimethylated residues. Demethylation of Lys residue generates formaldehyde and succinate. Participates in transcriptional repression of ASCL2 and E2F-responsive promoters via the recruitment of histone deacetylases and NCOR1, respectively. This chain is Lysine-specific demethylase 4A (Kdm4a), found in Mus musculus (Mouse).